The chain runs to 208 residues: Uracil phosphoribosyltransferase (208 aa).

5-phospho-alpha-D-ribose 1-diphosphate-binding positions include Arg78, Arg103, and 130–138 (DPMLATANS). Uracil-binding positions include Ile193 and 198-200 (GDA). 5-phospho-alpha-D-ribose 1-diphosphate is bound at residue Asp199.

Belongs to the UPRTase family. The cofactor is Mg(2+).

The catalysed reaction is UMP + diphosphate = 5-phospho-alpha-D-ribose 1-diphosphate + uracil. It participates in pyrimidine metabolism; UMP biosynthesis via salvage pathway; UMP from uracil: step 1/1. With respect to regulation, allosterically activated by GTP. Its function is as follows. Catalyzes the conversion of uracil and 5-phospho-alpha-D-ribose 1-diphosphate (PRPP) to UMP and diphosphate. The sequence is that of Uracil phosphoribosyltransferase from Brucella ovis (strain ATCC 25840 / 63/290 / NCTC 10512).